A 106-amino-acid chain; its full sequence is Putative double-stranded DNA mimic protein VV1_3059 (106 aa).

Belongs to the putative dsDNA mimic protein family.

Functionally, may act as a double-stranded DNA (dsDNA) mimic. Probably regulates the activity of a dsDNA-binding protein. In Vibrio vulnificus (strain CMCP6), this protein is Putative double-stranded DNA mimic protein VV1_3059.